An 86-amino-acid polypeptide reads, in one-letter code: Protein GOLVEN 1 (86 aa).

The N-terminal stretch at 1–29 (MSCSLRSGLVIVFCFILLLLSSNVGCASA) is a signal peptide. Positions 30–70 (ARRLRSHKHHHHKVASLDVFNGGERRRALGGVETGEEVVVM) are excised as a propeptide. At tyrosine 72 the chain carries Sulfotyrosine. A Hydroxyproline modification is found at proline 80. A propeptide spanning residues 84-86 (EKS) is cleaved from the precursor.

This sequence belongs to the RGF family. In terms of assembly, binds to LRR receptor-like serine/threonine-protein kinases to trigger their dimerization with SERK proteins and subsequent signaling. In terms of tissue distribution, expressed in stems, hypocotyls, cotyledons, leaves, flowers, shoot apex, siliques, stamens and petals.

The protein localises to the endoplasmic reticulum. Its subcellular location is the secreted. In terms of biological role, signaling peptide (root growth factor) that regulates the pattern of root growth and lateral root development by modulating the length and the number of cortical cells in the root apical meristem (RAM), and the anticlinal asymmetric cell divisions in lateral root initiation cells. Also involved in the regulation of hypocotyl bending and root gravitropism in a PIN2-traffic dependent manner, thus influencing the formation of auxin gradients. Maintains the postembryonic root stem cell niche. The polypeptide is Protein GOLVEN 1 (Arabidopsis thaliana (Mouse-ear cress)).